Here is a 118-residue protein sequence, read N- to C-terminus: Cysteine--tRNA ligase (118 aa).

Residue Cys-28 participates in Zn(2+) binding. A 'HIGH' region motif is present at residues 30–40; it reads PTVYNYIHIGN.

Belongs to the class-I aminoacyl-tRNA synthetase family. In terms of assembly, monomer. Requires Zn(2+) as cofactor.

It localises to the cytoplasm. The enzyme catalyses tRNA(Cys) + L-cysteine + ATP = L-cysteinyl-tRNA(Cys) + AMP + diphosphate. The chain is Cysteine--tRNA ligase (cysS) from Staphylococcus xylosus.